Consider the following 264-residue polypeptide: Thiazole synthase (264 aa).

Lys98 (schiff-base intermediate with DXP) is an active-site residue. Residues Gly159, Ala185 to Gly186, and Ala207 to Ser208 each bind 1-deoxy-D-xylulose 5-phosphate.

The protein belongs to the ThiG family. In terms of assembly, homotetramer. Forms heterodimers with either ThiH or ThiS.

The protein resides in the cytoplasm. The catalysed reaction is [ThiS sulfur-carrier protein]-C-terminal-Gly-aminoethanethioate + 2-iminoacetate + 1-deoxy-D-xylulose 5-phosphate = [ThiS sulfur-carrier protein]-C-terminal Gly-Gly + 2-[(2R,5Z)-2-carboxy-4-methylthiazol-5(2H)-ylidene]ethyl phosphate + 2 H2O + H(+). It functions in the pathway cofactor biosynthesis; thiamine diphosphate biosynthesis. Its function is as follows. Catalyzes the rearrangement of 1-deoxy-D-xylulose 5-phosphate (DXP) to produce the thiazole phosphate moiety of thiamine. Sulfur is provided by the thiocarboxylate moiety of the carrier protein ThiS. In vitro, sulfur can be provided by H(2)S. In Streptomyces griseus subsp. griseus (strain JCM 4626 / CBS 651.72 / NBRC 13350 / KCC S-0626 / ISP 5235), this protein is Thiazole synthase.